The primary structure comprises 247 residues: Small ribosomal subunit protein uS3 (247 aa).

The KH type-2 domain occupies 39 to 111; that stretch reads IYDFFDKKVR…NISIQVIELK (73 aa). The segment at 221 to 247 is disordered; it reads EEMDLLNAPKDRRVRRGGERHASTKKN. The span at 236-247 shows a compositional bias: basic and acidic residues; sequence RGGERHASTKKN.

It belongs to the universal ribosomal protein uS3 family. As to quaternary structure, part of the 30S ribosomal subunit. Forms a tight complex with proteins S10 and S14.

In terms of biological role, binds the lower part of the 30S subunit head. Binds mRNA in the 70S ribosome, positioning it for translation. This Metamycoplasma arthritidis (strain 158L3-1) (Mycoplasma arthritidis) protein is Small ribosomal subunit protein uS3.